The sequence spans 370 residues: Protein Mut11 (370 aa).

The disordered stretch occupies residues 1–22 (MARGPGDTDMDEASADAAIPSS). 7 WD repeats span residues 38 to 77 (GHTK…RVNT), 80 to 119 (GHSC…CLRT), 122 to 162 (GHTN…CLRE), 165 to 204 (AHSD…CLKT), 208 to 247 (RDSP…TRRT), 262 to 301 (GFLG…VVGR), and 329 to 370 (GHTA…PAAA).

Belongs to the WD repeat WDR5/wds family.

It is found in the nucleus. Its function is as follows. Part of a complex involved in 'Lys-4' histone H3 methylation. The sequence is that of Protein Mut11 (Mut11) from Chlamydomonas reinhardtii (Chlamydomonas smithii).